The chain runs to 137 residues: Large-conductance mechanosensitive channel (137 aa).

Transmembrane regions (helical) follow at residues 15–35 (VDLAIGVIIGGAFGGLVNSIV), 38–58 (IIMPIIGLITGGIDFSNMFIQ), and 80–100 (GNFVTLLINFLIIAWVLFLVV).

It belongs to the MscL family. Homopentamer.

Its subcellular location is the cell inner membrane. Its function is as follows. Channel that opens in response to stretch forces in the membrane lipid bilayer. May participate in the regulation of osmotic pressure changes within the cell. The sequence is that of Large-conductance mechanosensitive channel from Brucella anthropi (strain ATCC 49188 / DSM 6882 / CCUG 24695 / JCM 21032 / LMG 3331 / NBRC 15819 / NCTC 12168 / Alc 37) (Ochrobactrum anthropi).